The primary structure comprises 306 residues: Methyl-CpG-binding domain-containing protein 7 (306 aa).

Residues 1–11 are compositionally biased toward polar residues; that stretch reads MQTRSSSSPSA. Residues 1–21 are disordered; the sequence is MQTRSSSSPSANHRRETQLQI. MBD domains are found at residues 21-92, 106-171, and 172-242; these read IADP…QDKT, GVEY…RVLQ, and NRRG…ERLP. 3 positions are modified to asymmetric dimethylarginine: Arg-118, Arg-145, and Arg-174. Residues 163-306 are required for interaction with PRMT11; sequence IEQQLRVLQN…AFVSLIEDRS (144 aa).

In terms of assembly, interacts with PRMT11. Interacts (via C-terminus) with IDM2, but not with IDM1. Interacts with IDM3. Part of a complex made of MBD7, IDM1, IDM2 and IDM3. Post-translationally, methylated by PRMT11. As to expression, expressed in leaves, buds, flowers, stems, siliques, mature seeds and roots.

The protein localises to the nucleus. Its subcellular location is the chromosome. In terms of biological role, transcriptional regulator that binds CpG islands in promoters where the DNA is methylated at position 5 of cytosine within CpG dinucleotides. May directly affect chromatin structure by inducing intra- and inter- chromatin compaction via bridging over multiple methylated CpG sites. Acts as an anti-silencing factor that prevents DNA hypermethylation and gene repression. Requires high mCG density for binding. Recognizes preferentially mCGs located in transposable elements. Required for active DNA demethylation. Prefers to target genomic loci around chromocenters. In Arabidopsis thaliana (Mouse-ear cress), this protein is Methyl-CpG-binding domain-containing protein 7.